The following is a 473-amino-acid chain: Reticulon-4 receptor (473 aa).

Positions methionine 1 to proline 26 are cleaved as a signal peptide. Intrachain disulfides connect cysteine 27-cysteine 33 and cysteine 31-cysteine 43. An LRRNT domain is found at cysteine 27–alanine 57. 8 LRR repeats span residues serine 58–serine 79, asparagine 82–glycine 103, leucine 106–glycine 128, histidine 131–glycine 152, alanine 155–aspartate 176, asparagine 179–glycine 200, serine 203–aspartate 224, and arginine 227–proline 248. Asparagine 82 carries N-linked (GlcNAc...) asparagine glycosylation. An N-linked (GlcNAc...) asparagine glycan is attached at asparagine 179. An LRRCT domain is found at asparagine 260–valine 311. Intrachain disulfides connect cysteine 264–cysteine 287, cysteine 266–cysteine 335, and cysteine 309–cysteine 336. The interval valine 346–glycine 446 is disordered. Asparagine 372 carries N-linked (GlcNAc...) asparagine glycosylation. The segment covering proline 413–cysteine 429 has biased composition (basic residues). The span at alanine 434–glutamate 445 shows a compositional bias: gly residues. Serine 447 carries GPI-anchor amidated serine lipidation. The propeptide at glycine 448 to cysteine 473 is removed in mature form.

Belongs to the Nogo receptor family. As to quaternary structure, homodimer. Interacts with MAG. Interacts with RTN4. Interacts with NGFR. Interacts with LINGO1. Interacts with KIAA0319L. Interacts with OLFM1; this inhibits interaction with LINGO1 and NGFR. Interacts with OMG. N-glycosylated. O-glycosylated. Contains terminal sialic acid groups on its glycan chains. As to expression, detected in embryonic hippocampus neurons. Detected in brain (at protein level). Detected in neurons in the neocortex, in hippocampus, dorsal thalamus, cerebellum granule cell layer and the mitral cell layer in the olfactory bulb. Detected in brain, dorsal root ganglion and heart.

The protein localises to the cell membrane. The protein resides in the membrane raft. Its subcellular location is the cell projection. It localises to the dendrite. It is found in the axon. The protein localises to the perikaryon. Receptor for RTN4, OMG and MAG. Functions as a receptor for the sialylated gangliosides GT1b and GM1. Besides, functions as a receptor for chondroitin sulfate proteoglycans. Can also bind heparin. Intracellular signaling cascades are triggered via the coreceptor NGFR. Signaling mediates activation of Rho and downstream reorganization of the actin cytoskeleton. Mediates axonal growth inhibition. Mediates axonal growth inhibition and plays a role in regulating axon regeneration and neuronal plasticity in the adult central nervous system. Plays a role in postnatal brain development. Required for normal axon migration across the brain midline and normal formation of the corpus callosum. Protects motoneurons against apoptosis; protection against apoptosis is probably mediated via interaction with MAG. Acts in conjunction with RTN4 and LINGO1 in regulating neuronal precursor cell motility during cortical development. Like other family members, plays a role in restricting the number dendritic spines and the number of synapses that are formed during brain development. The polypeptide is Reticulon-4 receptor (Rtn4r) (Mus musculus (Mouse)).